The primary structure comprises 91 residues: Small ribosomal subunit protein uS15 (91 aa).

Belongs to the universal ribosomal protein uS15 family. As to quaternary structure, part of the 30S ribosomal subunit. Forms a bridge to the 50S subunit in the 70S ribosome, contacting the 23S rRNA.

Its function is as follows. One of the primary rRNA binding proteins, it binds directly to 16S rRNA where it helps nucleate assembly of the platform of the 30S subunit by binding and bridging several RNA helices of the 16S rRNA. Functionally, forms an intersubunit bridge (bridge B4) with the 23S rRNA of the 50S subunit in the ribosome. The chain is Small ribosomal subunit protein uS15 from Legionella pneumophila (strain Paris).